A 147-amino-acid polypeptide reads, in one-letter code: Large ribosomal subunit protein uL15 (147 aa).

A compositionally biased stretch (basic and acidic residues) spans 1–14; the sequence is MKLHELRPAEGAVR. Residues 1–54 are disordered; that stretch reads MKLHELRPAEGAVRDRKRKGRGTASGLGKTAGRGSNGQKARSGGGVRPGFEGGQ. Composition is skewed to gly residues over residues 23 to 35 and 42 to 52; these read TASGLGKTAGRGS and SGGGVRPGFEG.

Belongs to the universal ribosomal protein uL15 family. As to quaternary structure, part of the 50S ribosomal subunit.

Its function is as follows. Binds to the 23S rRNA. The polypeptide is Large ribosomal subunit protein uL15 (Alkaliphilus oremlandii (strain OhILAs) (Clostridium oremlandii (strain OhILAs))).